The sequence spans 560 residues: Dihydroxy-acid dehydratase (560 aa).

Asp80 is a binding site for Mg(2+). Position 121 (Cys121) interacts with [2Fe-2S] cluster. Mg(2+) is bound by residues Asp122 and Lys123. Lys123 is subject to N6-carboxylysine. Cys194 is a binding site for [2Fe-2S] cluster. Residue Glu447 coordinates Mg(2+). Catalysis depends on Ser473, which acts as the Proton acceptor.

It belongs to the IlvD/Edd family. Homodimer. The cofactor is [2Fe-2S] cluster. Mg(2+) is required as a cofactor.

It carries out the reaction (2R)-2,3-dihydroxy-3-methylbutanoate = 3-methyl-2-oxobutanoate + H2O. It catalyses the reaction (2R,3R)-2,3-dihydroxy-3-methylpentanoate = (S)-3-methyl-2-oxopentanoate + H2O. It functions in the pathway amino-acid biosynthesis; L-isoleucine biosynthesis; L-isoleucine from 2-oxobutanoate: step 3/4. It participates in amino-acid biosynthesis; L-valine biosynthesis; L-valine from pyruvate: step 3/4. Functions in the biosynthesis of branched-chain amino acids. Catalyzes the dehydration of (2R,3R)-2,3-dihydroxy-3-methylpentanoate (2,3-dihydroxy-3-methylvalerate) into 2-oxo-3-methylpentanoate (2-oxo-3-methylvalerate) and of (2R)-2,3-dihydroxy-3-methylbutanoate (2,3-dihydroxyisovalerate) into 2-oxo-3-methylbutanoate (2-oxoisovalerate), the penultimate precursor to L-isoleucine and L-valine, respectively. This is Dihydroxy-acid dehydratase from Chloroherpeton thalassium (strain ATCC 35110 / GB-78).